A 327-amino-acid chain; its full sequence is Probable cell division protein WhiA (327 aa).

Residues 275 to 308 (SLEELGRLADPPMTKDAVAGRIRRLLSMADRKAK) constitute a DNA-binding region (H-T-H motif). The segment at 304–327 (DRKAKQDGIPDTESAVTPDLLEDA) is disordered.

It belongs to the WhiA family.

Functionally, involved in cell division and chromosome segregation. This Mycolicibacterium gilvum (strain PYR-GCK) (Mycobacterium gilvum (strain PYR-GCK)) protein is Probable cell division protein WhiA.